A 137-amino-acid chain; its full sequence is Peptide methionine sulfoxide reductase MsrB (137 aa).

The region spanning 7 to 129 (VDDLKENLSE…NSASLSFTDE (123 aa)) is the MsrB domain. Zn(2+) is bound by residues cysteine 46, cysteine 49, cysteine 95, and cysteine 98. Catalysis depends on cysteine 118, which acts as the Nucleophile.

This sequence belongs to the MsrB Met sulfoxide reductase family. Requires Zn(2+) as cofactor.

The enzyme catalyses L-methionyl-[protein] + [thioredoxin]-disulfide + H2O = L-methionyl-(R)-S-oxide-[protein] + [thioredoxin]-dithiol. The sequence is that of Peptide methionine sulfoxide reductase MsrB from Escherichia fergusonii (strain ATCC 35469 / DSM 13698 / CCUG 18766 / IAM 14443 / JCM 21226 / LMG 7866 / NBRC 102419 / NCTC 12128 / CDC 0568-73).